We begin with the raw amino-acid sequence, 305 residues long: UDP-3-O-acyl-N-acetylglucosamine deacetylase (305 aa).

Zn(2+) is bound by residues H79, H238, and D242. The active-site Proton donor is H265.

The protein belongs to the LpxC family. Zn(2+) is required as a cofactor.

It catalyses the reaction a UDP-3-O-[(3R)-3-hydroxyacyl]-N-acetyl-alpha-D-glucosamine + H2O = a UDP-3-O-[(3R)-3-hydroxyacyl]-alpha-D-glucosamine + acetate. It functions in the pathway glycolipid biosynthesis; lipid IV(A) biosynthesis; lipid IV(A) from (3R)-3-hydroxytetradecanoyl-[acyl-carrier-protein] and UDP-N-acetyl-alpha-D-glucosamine: step 2/6. Functionally, catalyzes the hydrolysis of UDP-3-O-myristoyl-N-acetylglucosamine to form UDP-3-O-myristoylglucosamine and acetate, the committed step in lipid A biosynthesis. The protein is UDP-3-O-acyl-N-acetylglucosamine deacetylase of Salmonella typhi.